Here is a 278-residue protein sequence, read N- to C-terminus: DNA repair protein RecO (278 aa).

The span at 1-12 shows a compositional bias: polar residues; that stretch reads MGTNDALTSTED. Residues 1–41 form a disordered region; the sequence is MGTNDALTSTEDAVTAGANDAPLPAPPEPPRKARRATSRTS.

It belongs to the RecO family.

In terms of biological role, involved in DNA repair and RecF pathway recombination. This chain is DNA repair protein RecO, found in Burkholderia orbicola (strain AU 1054).